The following is a 242-amino-acid chain: Interleukin-34 (242 aa).

Residues methionine 1–glycine 20 form the signal peptide. The N-linked (GlcNAc...) asparagine glycan is linked to asparagine 76. Residues threonine 210–proline 242 are disordered. Residues tyrosine 213–proline 223 show a composition bias toward pro residues.

The protein belongs to the IL-34 family. As to quaternary structure, homodimer. Interacts with CSF1R. As to expression, detected in the sinusoidal epithelium in the red pulp of spleen (at protein level). Predominantly expressed in spleen. Also detected in a range of other tissues including heart, brain, lung, liver, kidney, thymus, testis, ovary, small intestine, prostate and colon.

The protein localises to the secreted. Its function is as follows. Cytokine that promotes the proliferation, survival and differentiation of monocytes and macrophages. Promotes the release of pro-inflammatory chemokines, and thereby plays an important role in innate immunity and in inflammatory processes. Plays an important role in the regulation of osteoclast proliferation and differentiation, and in the regulation of bone resorption. Signaling via CSF1R and its downstream effectors stimulates phosphorylation of MAPK1/ERK2 AND MAPK3/ERK1. In Homo sapiens (Human), this protein is Interleukin-34 (IL34).